Consider the following 288-residue polypeptide: Acetyl-coenzyme A carboxylase carboxyl transferase subunit beta (288 aa).

The region spanning L34–Q288 is the CoA carboxyltransferase N-terminal domain. Zn(2+) is bound by residues C38, C41, C56, and C59. A C4-type zinc finger spans residues C38 to C59.

The protein belongs to the AccD/PCCB family. In terms of assembly, acetyl-CoA carboxylase is a heterohexamer composed of biotin carboxyl carrier protein (AccB), biotin carboxylase (AccC) and two subunits each of ACCase subunit alpha (AccA) and ACCase subunit beta (AccD). It depends on Zn(2+) as a cofactor.

Its subcellular location is the cytoplasm. The catalysed reaction is N(6)-carboxybiotinyl-L-lysyl-[protein] + acetyl-CoA = N(6)-biotinyl-L-lysyl-[protein] + malonyl-CoA. Its pathway is lipid metabolism; malonyl-CoA biosynthesis; malonyl-CoA from acetyl-CoA: step 1/1. Functionally, component of the acetyl coenzyme A carboxylase (ACC) complex. Biotin carboxylase (BC) catalyzes the carboxylation of biotin on its carrier protein (BCCP) and then the CO(2) group is transferred by the transcarboxylase to acetyl-CoA to form malonyl-CoA. The protein is Acetyl-coenzyme A carboxylase carboxyl transferase subunit beta of Streptococcus pyogenes serotype M6 (strain ATCC BAA-946 / MGAS10394).